Reading from the N-terminus, the 196-residue chain is Ribosome maturation factor RimP (196 aa).

The segment at 164 to 196 (LAPQKPNKPGPKKTGHEKKKPSNESAAGKPRAE) is disordered. Positions 173–182 (GPKKTGHEKK) are enriched in basic residues.

The protein belongs to the RimP family.

It is found in the cytoplasm. Required for maturation of 30S ribosomal subunits. This Xanthomonas oryzae pv. oryzae (strain MAFF 311018) protein is Ribosome maturation factor RimP.